The sequence spans 291 residues: N-acetylmannosamine kinase (291 aa).

ATP contacts are provided by residues 5 to 12 (AIDIGGTK) and 132 to 139 (GVGGGVVS). 4 residues coordinate Zn(2+): His-156, Cys-166, Cys-168, and Cys-173.

Belongs to the ROK (NagC/XylR) family. NanK subfamily. Homodimer.

It catalyses the reaction an N-acyl-D-mannosamine + ATP = an N-acyl-D-mannosamine 6-phosphate + ADP + H(+). The protein operates within amino-sugar metabolism; N-acetylneuraminate degradation; D-fructose 6-phosphate from N-acetylneuraminate: step 2/5. In terms of biological role, catalyzes the phosphorylation of N-acetylmannosamine (ManNAc) to ManNAc-6-P. This chain is N-acetylmannosamine kinase, found in Escherichia coli O139:H28 (strain E24377A / ETEC).